The following is a 253-amino-acid chain: Phosphoribosylaminoimidazole-succinocarboxamide synthase (253 aa).

This sequence belongs to the SAICAR synthetase family.

The enzyme catalyses 5-amino-1-(5-phospho-D-ribosyl)imidazole-4-carboxylate + L-aspartate + ATP = (2S)-2-[5-amino-1-(5-phospho-beta-D-ribosyl)imidazole-4-carboxamido]succinate + ADP + phosphate + 2 H(+). It functions in the pathway purine metabolism; IMP biosynthesis via de novo pathway; 5-amino-1-(5-phospho-D-ribosyl)imidazole-4-carboxamide from 5-amino-1-(5-phospho-D-ribosyl)imidazole-4-carboxylate: step 1/2. The chain is Phosphoribosylaminoimidazole-succinocarboxamide synthase from Jannaschia sp. (strain CCS1).